Consider the following 641-residue polypeptide: Chaperone protein DnaK (641 aa).

Thr-198 is subject to Phosphothreonine; by autocatalysis. 3 stretches are compositionally biased toward basic and acidic residues: residues 514–529 (AEAN…EGVE), 540–554 (SSEK…KVSE), and 608–621 (AHAD…RSGD). Disordered stretches follow at residues 514 to 554 (AEAN…KVSE) and 604 to 641 (QTES…KRSA). Acidic residues predominate over residues 622–633 (DVVDADYEEVKD).

It belongs to the heat shock protein 70 family.

Functionally, acts as a chaperone. The polypeptide is Chaperone protein DnaK (Sinorhizobium medicae (strain WSM419) (Ensifer medicae)).